The chain runs to 253 residues: Isoprenyl transferase (253 aa).

Asp32 is a catalytic residue. Residue Asp32 participates in Mg(2+) binding. Residues 33 to 36 (GNGR), Trp37, Arg45, His49, and 77 to 79 (STE) each bind substrate. Catalysis depends on Asn80, which acts as the Proton acceptor. Residues Trp81, Arg83, Arg200, and 206–208 (RLS) contribute to the substrate site. Glu219 provides a ligand contact to Mg(2+).

It belongs to the UPP synthase family. In terms of assembly, homodimer. Requires Mg(2+) as cofactor.

Its function is as follows. Catalyzes the condensation of isopentenyl diphosphate (IPP) with allylic pyrophosphates generating different type of terpenoids. This chain is Isoprenyl transferase, found in Clostridium perfringens (strain 13 / Type A).